The chain runs to 314 residues: uncharacterized protein (314 aa).

The signal sequence occupies residues Met-1 to Ala-26. The segment covering Gly-41–His-60 has biased composition (polar residues). 4 disordered regions span residues Gly-41–Leu-65, Leu-77–Gln-96, Gly-147–Leu-191, and Pro-292–Gly-314. Low complexity predominate over residues Gly-147–Pro-157. Residues Ser-167 to Arg-177 are compositionally biased toward basic and acidic residues. The segment covering Phe-303–Gly-314 has biased composition (pro residues).

Binds to numerous extracellular matrix proteins. Taste cell specific.

It is found in the secreted. The protein localises to the extracellular space. The protein resides in the extracellular matrix. This is an uncharacterized protein from Macaca mulatta (Rhesus macaque).